A 435-amino-acid polypeptide reads, in one-letter code: ATP-dependent RNA helicase RhlB (435 aa).

The Q motif motif lies at 9–37; the sequence is QKFADLGLNPQVVEGLEKKGFEFCTPIQA. In terms of domain architecture, Helicase ATP-binding spans 40–219; it reads LPVLLSGQDI…FEHMHNPEHV (180 aa). 53–60 lines the ATP pocket; sequence AQTGTGKT. The short motif at 165–168 is the DEAD box element; it reads DEAD. Positions 245–390 constitute a Helicase C-terminal domain; sequence ALLQTLIEEE…VSDYDSSALI (146 aa). Residues 395–435 are disordered; that stretch reads APVRTPSARNQQRRTNTGGARSGDRKSNNRRPRQPRQHKEA. A compositionally biased stretch (polar residues) spans 401 to 413; it reads SARNQQRRTNTGG. The segment covering 422 to 435 has biased composition (basic residues); that stretch reads NNRRPRQPRQHKEA.

It belongs to the DEAD box helicase family. RhlB subfamily. As to quaternary structure, component of the RNA degradosome, which is a multiprotein complex involved in RNA processing and mRNA degradation.

Its subcellular location is the cytoplasm. The enzyme catalyses ATP + H2O = ADP + phosphate + H(+). Functionally, DEAD-box RNA helicase involved in RNA degradation. Has RNA-dependent ATPase activity and unwinds double-stranded RNA. This chain is ATP-dependent RNA helicase RhlB, found in Vibrio vulnificus (strain YJ016).